The chain runs to 87 residues: Large ribosomal subunit protein bL27 (87 aa).

The disordered stretch occupies residues 1–26 (MAHKKGTGSTRNGRDSNSKRLGVKAY).

This sequence belongs to the bacterial ribosomal protein bL27 family.

The polypeptide is Large ribosomal subunit protein bL27 (Prochlorococcus marinus (strain SARG / CCMP1375 / SS120)).